A 274-amino-acid chain; its full sequence is CTO1 family protein C17G9.12c (274 aa).

The protein belongs to the CTO1 family.

It localises to the cytoplasm. The protein resides in the nucleus. In Schizosaccharomyces pombe (strain 972 / ATCC 24843) (Fission yeast), this protein is CTO1 family protein C17G9.12c.